We begin with the raw amino-acid sequence, 500 residues long: MPDAVKVGFVPFSAAARGTLVVFCDDTLKFGSVTGKALGAAASTVKRAVAASQFKGKSGSALDLLAPEGLKVGRLIVIGTGKAAALKDNDIVKLGGAVAGKLSTGDSAVTVIAELPGGAMRPEQAAAVASGIRLRAYKFDRYKTKKKDDDADAANANVSIAVADVAAAKKAFAPDSHVVDGVILARELVNEPPNVLYPEEFAKRAAQLRKLGVQVEILDVKAMTRLKMGALLGVSQGSAHPGRTVIMRWNGGKRGAQPVAFVGKGVCFDTGGISIKPSASMEDMKGDMGGAACVVGLMHALAARKAKINVIGAIGLVENMPDGNAQRPGDIVTSMSGQTIEIINTDAEGRLVLADVLWYVAQKHKPKFMVDLATLTGAIMVALGTDHAGLFSNNDELAERLTAAGLSTGERVWRMPLGPEYDKQIDSQFADMKNTGSRNGGSITAAQFLQRFVDNTPWAHLDIAGTAMGAPKSDINHSWGSGYGVRLLNALVAEHYEAKK.

2 residues coordinate Mn(2+): K264 and D269. K276 is an active-site residue. Mn(2+) is bound by residues D287, D346, and E348. Residue R350 is part of the active site.

Belongs to the peptidase M17 family. Mn(2+) serves as cofactor.

Its subcellular location is the cytoplasm. It catalyses the reaction Release of an N-terminal amino acid, Xaa-|-Yaa-, in which Xaa is preferably Leu, but may be other amino acids including Pro although not Arg or Lys, and Yaa may be Pro. Amino acid amides and methyl esters are also readily hydrolyzed, but rates on arylamides are exceedingly low.. It carries out the reaction Release of an N-terminal amino acid, preferentially leucine, but not glutamic or aspartic acids.. Functionally, presumably involved in the processing and regular turnover of intracellular proteins. Catalyzes the removal of unsubstituted N-terminal amino acids from various peptides. This Rhodopseudomonas palustris (strain BisB5) protein is Probable cytosol aminopeptidase.